Reading from the N-terminus, the 152-residue chain is UPF0225 protein YchJ (152 aa).

This sequence belongs to the UPF0225 family.

The sequence is that of UPF0225 protein YchJ from Escherichia coli O127:H6 (strain E2348/69 / EPEC).